We begin with the raw amino-acid sequence, 295 residues long: Tyrosine recombinase XerD (295 aa).

A Core-binding (CB) domain is found at 1–85 (MNTIIEEYLN…TIRSFHQFAL (85 aa)). One can recognise a Tyr recombinase domain in the interval 106-289 (KLPDVLEIDE…SKSQIRKMYT (184 aa)). Catalysis depends on residues arginine 146, lysine 170, histidine 241, arginine 244, and histidine 267. Tyrosine 276 functions as the O-(3'-phospho-DNA)-tyrosine intermediate in the catalytic mechanism.

It belongs to the 'phage' integrase family. XerD subfamily. In terms of assembly, forms a cyclic heterotetrameric complex composed of two molecules of XerC and two molecules of XerD.

The protein resides in the cytoplasm. In terms of biological role, site-specific tyrosine recombinase, which acts by catalyzing the cutting and rejoining of the recombining DNA molecules. The XerC-XerD complex is essential to convert dimers of the bacterial chromosome into monomers to permit their segregation at cell division. It also contributes to the segregational stability of plasmids. The protein is Tyrosine recombinase XerD of Staphylococcus epidermidis (strain ATCC 35984 / DSM 28319 / BCRC 17069 / CCUG 31568 / BM 3577 / RP62A).